A 156-amino-acid chain; its full sequence is Ribosomal RNA large subunit methyltransferase H (156 aa).

S-adenosyl-L-methionine-binding positions include L72, G104, and 123–128 (LGKMVW).

It belongs to the RNA methyltransferase RlmH family. Homodimer.

The protein localises to the cytoplasm. The enzyme catalyses pseudouridine(1915) in 23S rRNA + S-adenosyl-L-methionine = N(3)-methylpseudouridine(1915) in 23S rRNA + S-adenosyl-L-homocysteine + H(+). In terms of biological role, specifically methylates the pseudouridine at position 1915 (m3Psi1915) in 23S rRNA. This is Ribosomal RNA large subunit methyltransferase H from Roseobacter denitrificans (strain ATCC 33942 / OCh 114) (Erythrobacter sp. (strain OCh 114)).